The chain runs to 168 residues: Protein-export protein SecB (168 aa).

It belongs to the SecB family. As to quaternary structure, homotetramer, a dimer of dimers. One homotetramer interacts with 1 SecA dimer.

It is found in the cytoplasm. Its function is as follows. One of the proteins required for the normal export of preproteins out of the cell cytoplasm. It is a molecular chaperone that binds to a subset of precursor proteins, maintaining them in a translocation-competent state. It also specifically binds to its receptor SecA. In Sinorhizobium medicae (strain WSM419) (Ensifer medicae), this protein is Protein-export protein SecB.